We begin with the raw amino-acid sequence, 61 residues long: Double gene block protein 1 (61 aa).

The disordered stretch occupies residues 15-45 (LAGNRGKQKTRRSVAKDAIRKPASDSTNGGN). The interval 17–35 (GNRGKQKTRRSVAKDAIRK) is RNA-binding. Residues 28–37 (VAKDAIRKPA) show a composition bias toward basic and acidic residues.

The protein belongs to the carmovirus double gene block protein 1 family. As to quaternary structure, homodimer.

In terms of biological role, cell-to-cell movement. Displays RNA-binding activity. The protein is Double gene block protein 1 of Carnation mottle virus (isolate China/Shanghai) (CarMV).